The following is a 338-amino-acid chain: 1-aminocyclopropane-1-carboxylate deaminase (338 aa).

At Lys-51 the chain carries N6-(pyridoxal phosphate)lysine. Ser-78 functions as the Nucleophile in the catalytic mechanism.

The protein belongs to the ACC deaminase/D-cysteine desulfhydrase family. In terms of assembly, homotrimer. Pyridoxal 5'-phosphate serves as cofactor.

It carries out the reaction 1-aminocyclopropane-1-carboxylate + H2O = 2-oxobutanoate + NH4(+). Its function is as follows. Catalyzes a cyclopropane ring-opening reaction, the irreversible conversion of 1-aminocyclopropane-1-carboxylate (ACC) to ammonia and alpha-ketobutyrate. Allows growth on ACC as a nitrogen source. This is 1-aminocyclopropane-1-carboxylate deaminase from Ralstonia pickettii (strain 12J).